Reading from the N-terminus, the 104-residue chain is Pterin-4-alpha-carbinolamine dehydratase (104 aa).

Ala-2 carries the post-translational modification N-acetylalanine. Residues 61–63 and 78–81 contribute to the substrate site; these read DHH and STHE.

It belongs to the pterin-4-alpha-carbinolamine dehydratase family. As to quaternary structure, homotetramer and homodimer. Heterotetramer with HNF1A; formed by a dimer of dimers. Interacts with HNF1B (via HNF-p1 domain); the interaction increases HNF1B transactivation activity. In terms of tissue distribution, mainly expressed in the liver, in pancreatic cells, and in the kidney, especially in the distal convoluted tubule, in the cortical thick ascending limb of Henle's loop and in the connecting tubule.

It localises to the cytoplasm. The protein resides in the nucleus. It catalyses the reaction (4aS,6R)-4a-hydroxy-L-erythro-5,6,7,8-tetrahydrobiopterin = (6R)-L-erythro-6,7-dihydrobiopterin + H2O. Involved in tetrahydrobiopterin biosynthesis. Seems to both prevent the formation of 7-pterins and accelerate the formation of quinonoid-BH2. Coactivator for HNF1A-dependent transcription. Regulates the dimerization of homeodomain protein HNF1A and enhances its transcriptional activity. Also acts as a coactivator for HNF1B-dependent transcription. This Mus musculus (Mouse) protein is Pterin-4-alpha-carbinolamine dehydratase (Pcbd1).